We begin with the raw amino-acid sequence, 146 residues long: NADH-ubiquinone oxidoreductase chain 6 (146 aa).

Helical transmembrane passes span I10 to V30, L43 to I63, V81 to I101, and A124 to M144.

The protein belongs to the complex I subunit 6 family.

Its subcellular location is the mitochondrion membrane. The catalysed reaction is a ubiquinone + NADH + 5 H(+)(in) = a ubiquinol + NAD(+) + 4 H(+)(out). In terms of biological role, core subunit of the mitochondrial membrane respiratory chain NADH dehydrogenase (Complex I) that is believed to belong to the minimal assembly required for catalysis. Complex I functions in the transfer of electrons from NADH to the respiratory chain. The immediate electron acceptor for the enzyme is believed to be ubiquinone. The sequence is that of NADH-ubiquinone oxidoreductase chain 6 (NAD6) from Candida albicans (strain SC5314 / ATCC MYA-2876) (Yeast).